An 801-amino-acid chain; its full sequence is Zinc finger Y-chromosomal protein (801 aa).

Serine 270 bears the Phosphoserine mark. Residues 421–443 (YPCMICGKKFKSRGFLKRHMKNH) form a C2H2-type 1 zinc finger. A C2H2-type 2; atypical zinc finger spans residues 452–474 (YHCTDCDYTTNKKISLHNHLESH). C2H2-type zinc fingers lie at residues 484–506 (IECD…KMVH), 515–538 (HKCK…LAVH), 544–566 (HICV…MRIH), 572–595 (YQCQ…KTKH), 601–623 (FKCD…TLVH), 629–652 (HQCL…ISVH), 658–680 (HKCE…VAVH), 686–709 (HQCR…LSVH), 715–737 (FRCK…MKTH), 743–766 (YQCE…ISIH), and 772–795 (HRCE…MRHH).

This sequence belongs to the krueppel C2H2-type zinc-finger protein family. ZFX/ZFY subfamily.

It localises to the nucleus. Probable transcriptional activator. Binds to the consensus sequence 5'-AGGCCY-3'. This is Zinc finger Y-chromosomal protein (ZFY) from Homo sapiens (Human).